The sequence spans 335 residues: tRNA N6-adenosine threonylcarbamoyltransferase (335 aa).

A divalent metal cation is bound by residues His-109, His-113, and Tyr-130. Substrate contacts are provided by residues 130-134 (YVSGG), Asp-162, Gly-177, Glu-181, and Asn-266. Asp-294 is a binding site for a divalent metal cation.

This sequence belongs to the KAE1 / TsaD family. As to quaternary structure, component of the EKC/KEOPS complex composed of at least GON7, TP53RK, TPRKB, OSGEP and LAGE3; the whole complex dimerizes. Interacts with PRAME. The cofactor is a divalent metal cation. As to expression, widely expressed at low level. Expressed in heart, placenta, liver, kidney, lung, brain, skeletal muscle and pancreas.

The protein localises to the cytoplasm. It localises to the nucleus. The catalysed reaction is L-threonylcarbamoyladenylate + adenosine(37) in tRNA = N(6)-L-threonylcarbamoyladenosine(37) in tRNA + AMP + H(+). Its function is as follows. Component of the EKC/KEOPS complex that is required for the formation of a threonylcarbamoyl group on adenosine at position 37 (t(6)A37) in tRNAs that read codons beginning with adenine. The complex is probably involved in the transfer of the threonylcarbamoyl moiety of threonylcarbamoyl-AMP (TC-AMP) to the N6 group of A37. OSGEP likely plays a direct catalytic role in this reaction, but requires other protein(s) of the complex to fulfill this activity. This chain is tRNA N6-adenosine threonylcarbamoyltransferase, found in Homo sapiens (Human).